The primary structure comprises 554 residues: Folate synthesis bifunctional protein, mitochondrial (554 aa).

The N-terminal 42 residues, 1–42 (MAPLLSQTLIHTGRFLLRRFLEPPPAVISAVAASRVCFHRYY), are a transit peptide targeting the mitochondrion. The interval 90 to 215 (VIALGSNIGN…SFVLAPLVDL (126 aa)) is HPPK. The region spanning 273–541 (THVMGILNLT…NVRHNADAAK (269 aa)) is the Pterin-binding domain. Positions 275–554 (VMGILNLTPD…AMLRRRRSKG (280 aa)) are DHPS. Asparagine 280 contacts Mg(2+). (7,8-dihydropterin-6-yl)methyl diphosphate contacts are provided by residues threonine 320, aspartate 357, asparagine 376, aspartate 449, lysine 494, and 529–531 (RVH).

In the N-terminal section; belongs to the HPPK family. This sequence in the C-terminal section; belongs to the DHPS family. The cofactor is Mg(2+). Ubiquitous.

Its subcellular location is the mitochondrion. It carries out the reaction 6-hydroxymethyl-7,8-dihydropterin + ATP = (7,8-dihydropterin-6-yl)methyl diphosphate + AMP + H(+). It catalyses the reaction (7,8-dihydropterin-6-yl)methyl diphosphate + 4-aminobenzoate = 7,8-dihydropteroate + diphosphate. The protein operates within cofactor biosynthesis; tetrahydrofolate biosynthesis; 2-amino-4-hydroxy-6-hydroxymethyl-7,8-dihydropteridine diphosphate from 7,8-dihydroneopterin triphosphate: step 4/4. It functions in the pathway cofactor biosynthesis; tetrahydrofolate biosynthesis; 7,8-dihydrofolate from 2-amino-4-hydroxy-6-hydroxymethyl-7,8-dihydropteridine diphosphate and 4-aminobenzoate: step 1/2. Its function is as follows. Catalyzes the first two consecutive steps of tetrahydrofolate biosynthesis. The chain is Folate synthesis bifunctional protein, mitochondrial from Arabidopsis thaliana (Mouse-ear cress).